Here is a 553-residue protein sequence, read N- to C-terminus: Putative transport protein KPN78578_40470 (553 aa).

5 helical membrane passes run 4–24, 28–48, 65–85, 95–115, and 158–178; these read IALTVSVLALVAVVGLWIGNV, GVGFGIGGVLFGGIIVGHFVD, FGLILFVYTIGIQVGPGFFAS, LFAILIVILGGLVTAVLHKLF, and MSYAMAYPFGICGILLTMWLV. RCK C-terminal domains are found at residues 192–276 and 279–361; these read RFEE…VIGQ and ATSL…ELGN. The next 6 membrane-spanning stretches (helical) occupy residues 371 to 391, 403 to 425, 437 to 457, 464 to 484, 493 to 513, and 532 to 552; these read MLPVFIGIGLGVLLGSIPLFI, AGGPLIMALILGRIGSIGKLYWF, LGIVLFLAVVGLKSGGDFVAT, LSWIAYGIFITAIPLLTVGVL, YLTLCGMLAGSMTDPPALAFA, and PLVMFLRIITPQLLAVLFWGL.

It belongs to the AAE transporter (TC 2.A.81) family. YidE subfamily.

The protein resides in the cell membrane. The polypeptide is Putative transport protein KPN78578_40470 (Klebsiella pneumoniae subsp. pneumoniae (strain ATCC 700721 / MGH 78578)).